The chain runs to 137 residues: Large ribosomal subunit protein uL16 (137 aa).

Belongs to the universal ribosomal protein uL16 family. Part of the 50S ribosomal subunit.

Functionally, binds 23S rRNA and is also seen to make contacts with the A and possibly P site tRNAs. This Dinoroseobacter shibae (strain DSM 16493 / NCIMB 14021 / DFL 12) protein is Large ribosomal subunit protein uL16.